The following is a 769-amino-acid chain: MDIGKKHVIPKSQYRRKRREFFHNEDREENLNQHQDKQNIDNTTSKKADKQIHKDSIDKHERFKNSLSSHLEQRNRDVNENKAEESKSNQDSKSAYNRDHYLTDDVSKKQNSLDSVDQDTEKSKYYEQNSEATLSTKSTDKVESTEMRKLSSDKNKVGHEEQHVLSKPSEHDKETRIDSESSRTDSDSSMQTEKIKKDSSDGNKSSNLKSEVISDKSNTVPKLSESDDEVNNQKPLTLPEEQKLKRQQSQNEQTKTYTYGDSEQNDKSNHENDLSHHIPSISDDKDNVMRENHIVDDNPDNDINTPSLSKTDDDRKLDEKIHVEDKHKQNADSSETVGYQSQSTASHRSTEKRNISINDHDKLNGQKTNTKTSANNNQKKATSKLNKGRATNNNYSDILKKFWMMYWPKLVILMGIIILIVILNAIFNNVNKNDRMNDNNDADAQKYTTTMKNANNTVKSVVTVENETSKDSSLPKDKASQDEVGSGVVYKKSGDTLYIVTNAHVVGDKENQKITFSNNKSVVGKVLGKDKWSDLAVVKATSSDSSVKEIAIGDSNNLVLGEPILVVGNPLGVDFKGTVTEGIISGLNRNVPIDFDKDNKYDMLMKAFQIDASVNPGNSGGAVVNREGKLIGVVAAKISMPNVENMSFAIPVNEVQKIVKDLETKGKIDYPDVGVKMKNIVSLNSFERQAVKLPGKVKNGVVVDQVDNNGLADQSGLKKGDVITELDGKLLEDDLRFRQIIFSHKDDLKSITAKIYRDGKEKEINIKLK.

Basic residues predominate over residues 1–20 (MDIGKKHVIPKSQYRRKRRE). The disordered stretch occupies residues 1–390 (MDIGKKHVIP…ATSKLNKGRA (390 aa)). Composition is skewed to basic and acidic residues over residues 21 to 64 (FFHN…ERFK) and 71 to 108 (LEQR…DVSK). A compositionally biased stretch (polar residues) spans 126-137 (YEQNSEATLSTK). Residues 138–186 (STDKVESTEMRKLSSDKNKVGHEEQHVLSKPSEHDKETRIDSESSRTDS) show a composition bias toward basic and acidic residues. Positions 247–262 (QQSQNEQTKTYTYGDS) are enriched in polar residues. 2 stretches are compositionally biased toward basic and acidic residues: residues 264 to 296 (QNDK…HIVD) and 310 to 330 (KTDD…HKQN). Over residues 331–347 (ADSSETVGYQSQSTASH) the composition is skewed to polar residues. Basic and acidic residues predominate over residues 348–364 (RSTEKRNISINDHDKLN). Polar residues predominate over residues 365–390 (GQKTNTKTSANNNQKKATSKLNKGRA). Residues 410–430 (LVILMGIIILIVILNAIFNNV) form a helical membrane-spanning segment. Residues His-504, Asp-534, and Ser-619 each act as charge relay system in the active site. One can recognise a PDZ domain in the interval 680-733 (IVSLNSFERQAVKLPGKVKNGVVVDQVDNNGLADQSGLKKGDVITELDGKLLED).

It belongs to the peptidase S1C family.

The protein resides in the cell membrane. The chain is Serine protease HtrA-like from Staphylococcus aureus (strain NCTC 8325 / PS 47).